A 200-amino-acid chain; its full sequence is Ribonuclease HII (200 aa).

The region spanning 10–200 is the RNase H type-2 domain; it reads LIEAGCDEAG…LGDGQLNLNF (191 aa). The a divalent metal cation site is built by Asp16, Glu17, and Asp108.

The protein belongs to the RNase HII family. Mn(2+) serves as cofactor. The cofactor is Mg(2+).

The protein resides in the cytoplasm. It catalyses the reaction Endonucleolytic cleavage to 5'-phosphomonoester.. In terms of biological role, endonuclease that specifically degrades the RNA of RNA-DNA hybrids. The sequence is that of Ribonuclease HII from Bacteroides thetaiotaomicron (strain ATCC 29148 / DSM 2079 / JCM 5827 / CCUG 10774 / NCTC 10582 / VPI-5482 / E50).